The chain runs to 40 residues: Large ribosomal subunit protein bL36B (40 aa).

It belongs to the bacterial ribosomal protein bL36 family.

The sequence is that of Large ribosomal subunit protein bL36B from Kocuria rhizophila (strain ATCC 9341 / DSM 348 / NBRC 103217 / DC2201).